Consider the following 138-residue polypeptide: Putative ribonuclease VapC45 (138 aa).

Functionally, toxic component of a type II toxin-antitoxin (TA) system. An RNase. The cognate antitoxin is VapB45. The chain is Putative ribonuclease VapC45 from Mycobacterium tuberculosis (strain ATCC 25618 / H37Rv).